Reading from the N-terminus, the 561-residue chain is Dihydroxy-acid dehydratase 2 (561 aa).

Residue Cys-53 participates in [2Fe-2S] cluster binding. Asp-85 contacts Mg(2+). Cys-126 lines the [2Fe-2S] cluster pocket. Residues Asp-127 and Lys-128 each contribute to the Mg(2+) site. Residue Lys-128 is modified to N6-carboxylysine. Cys-195 lines the [2Fe-2S] cluster pocket. Position 446 (Glu-446) interacts with Mg(2+). The active-site Proton acceptor is Ser-472.

It belongs to the IlvD/Edd family. In terms of assembly, homodimer. It depends on [2Fe-2S] cluster as a cofactor. The cofactor is Mg(2+).

It catalyses the reaction (2R)-2,3-dihydroxy-3-methylbutanoate = 3-methyl-2-oxobutanoate + H2O. The enzyme catalyses (2R,3R)-2,3-dihydroxy-3-methylpentanoate = (S)-3-methyl-2-oxopentanoate + H2O. Its pathway is amino-acid biosynthesis; L-isoleucine biosynthesis; L-isoleucine from 2-oxobutanoate: step 3/4. It participates in amino-acid biosynthesis; L-valine biosynthesis; L-valine from pyruvate: step 3/4. In terms of biological role, functions in the biosynthesis of branched-chain amino acids. Catalyzes the dehydration of (2R,3R)-2,3-dihydroxy-3-methylpentanoate (2,3-dihydroxy-3-methylvalerate) into 2-oxo-3-methylpentanoate (2-oxo-3-methylvalerate) and of (2R)-2,3-dihydroxy-3-methylbutanoate (2,3-dihydroxyisovalerate) into 2-oxo-3-methylbutanoate (2-oxoisovalerate), the penultimate precursor to L-isoleucine and L-valine, respectively. This chain is Dihydroxy-acid dehydratase 2, found in Acinetobacter baylyi (strain ATCC 33305 / BD413 / ADP1).